Here is a 449-residue protein sequence, read N- to C-terminus: Tubulin alpha-8 chain (449 aa).

The short motif at methionine 1–cysteine 4 is the MREC motif element. Glutamine 11, glutamate 71, serine 140, glycine 144, threonine 145, threonine 179, asparagine 206, and asparagine 228 together coordinate GTP. Glutamate 71 is a Mg(2+) binding site. Glutamate 254 is an active-site residue.

This sequence belongs to the tubulin family. Dimer of alpha and beta chains. A typical microtubule is a hollow water-filled tube with an outer diameter of 25 nm and an inner diameter of 15 nM. Alpha-beta heterodimers associate head-to-tail to form protofilaments running lengthwise along the microtubule wall with the beta-tubulin subunit facing the microtubule plus end conferring a structural polarity. Microtubules usually have 13 protofilaments but different protofilament numbers can be found in some organisms and specialized cells. Mg(2+) serves as cofactor. Some glutamate residues at the C-terminus are polyglycylated, resulting in polyglycine chains on the gamma-carboxyl group. Glycylation is mainly limited to tubulin incorporated into axonemes (cilia and flagella) whereas glutamylation is prevalent in neuronal cells, centrioles, axonemes, and the mitotic spindle. Both modifications can coexist on the same protein on adjacent residues, and lowering polyglycylation levels increases polyglutamylation, and reciprocally. Cilia and flagella glycylation is required for their stability and maintenance. Flagella glycylation controls sperm motility. In terms of processing, some glutamate residues at the C-terminus are polyglutamylated, resulting in polyglutamate chains on the gamma-carboxyl group. Polyglutamylation plays a key role in microtubule severing by spastin (SPAST). SPAST preferentially recognizes and acts on microtubules decorated with short polyglutamate tails: severing activity by SPAST increases as the number of glutamates per tubulin rises from one to eight, but decreases beyond this glutamylation threshold. Glutamylation is also involved in cilia motility. Post-translationally, the C-terminal phenylalanine residue is cleaved by MATCAP1/KIAA0895L. Expressed at highest levels in the testis, followed by skeletal and heart muscle. Expressed at low levels in the developing brain.

The protein localises to the cytoplasm. It localises to the cytoskeleton. It carries out the reaction GTP + H2O = GDP + phosphate + H(+). Tubulin is the major constituent of microtubules, a cylinder consisting of laterally associated linear protofilaments composed of alpha- and beta-tubulin heterodimers. Microtubules grow by the addition of GTP-tubulin dimers to the microtubule end, where a stabilizing cap forms. Below the cap, tubulin dimers are in GDP-bound state, owing to GTPase activity of alpha-tubulin. This chain is Tubulin alpha-8 chain (Tuba8), found in Mus musculus (Mouse).